A 208-amino-acid polypeptide reads, in one-letter code: Small ribosomal subunit protein uS4 (208 aa).

A disordered region spans residues 31 to 51 (SALDKRAYGPGQHGQRRAKTS). The S4 RNA-binding domain occupies 98–156 (RRLDNVVYRMGFATTRSSARQLVTHGHVLVDGKRLDIPSYFVRSGQKIEIKEKTKSNPQ).

Belongs to the universal ribosomal protein uS4 family. As to quaternary structure, part of the 30S ribosomal subunit. Contacts protein S5. The interaction surface between S4 and S5 is involved in control of translational fidelity.

One of the primary rRNA binding proteins, it binds directly to 16S rRNA where it nucleates assembly of the body of the 30S subunit. Functionally, with S5 and S12 plays an important role in translational accuracy. In Helicobacter pylori (strain HPAG1), this protein is Small ribosomal subunit protein uS4.